A 732-amino-acid chain; its full sequence is Elongation factor 2 (732 aa).

The tr-type G domain maps to 19-260; that stretch reads ERIRNMGIAA…MVVRHLPNPL (242 aa). GTP contacts are provided by residues 28–35, 94–98, and 148–151; these read AHIDHGKT, DTPGH, and NKVD. The residue at position 597 (His597) is a Diphthamide.

The protein belongs to the TRAFAC class translation factor GTPase superfamily. Classic translation factor GTPase family. EF-G/EF-2 subfamily.

It localises to the cytoplasm. In terms of biological role, catalyzes the GTP-dependent ribosomal translocation step during translation elongation. During this step, the ribosome changes from the pre-translocational (PRE) to the post-translocational (POST) state as the newly formed A-site-bound peptidyl-tRNA and P-site-bound deacylated tRNA move to the P and E sites, respectively. Catalyzes the coordinated movement of the two tRNA molecules, the mRNA and conformational changes in the ribosome. This chain is Elongation factor 2, found in Thermococcus onnurineus (strain NA1).